We begin with the raw amino-acid sequence, 260 residues long: MEAVPEKKKKVAAALGTLKKKKVPAVPETLKKKRRNFAELKVKRLRKKFALKTLRKARRKLIYEKAKHYHKEYRQMYRTEIRMARMARKAGNFYVPAEPKLAFVIRIRGINGVSPKVRKVLQLLRLRQIFNGTFVKLNKASVNMLRIVEPYIAWGYPNLKSVNELIYKRGYGKINKKRIALTDNSLVARSLGKFGIICMEDLIHEIYTVGKRFKEANNFLWPFKLSSPRGGMKKKTTHFVEGGDAGNREDQINRLIRRMN.

Met1 is modified (N-acetylmethionine). 5 consecutive repeat copies span residues 7 to 18 (KKKKVAAALGTL), 19 to 30 (KKKKVPAVPETL), 31 to 42 (KKKRRNFAELKV), 43 to 54 (KRLRKKFALKTL), and 55 to 66 (RKARRKLIYEKA). A 5 X 12 AA tandem repeats region spans residues 7 to 66 (KKKKVAAALGTLKKKKVPAVPETLKKKRRNFAELKVKRLRKKFALKTLRKARRKLIYEKA). Thr29 bears the Phosphothreonine mark. Lys136 is modified (N6-acetyllysine). Residue Lys139 is modified to N6-succinyllysine. The residue at position 151 (Tyr151) is a Phosphotyrosine.

This sequence belongs to the universal ribosomal protein uL30 family. Component of the large ribosomal subunit. Homodimer. Interacts with DHX33.

It localises to the cytoplasm. Functionally, component of the large ribosomal subunit. The ribosome is a large ribonucleoprotein complex responsible for the synthesis of proteins in the cell. Binds to G-rich structures in 28S rRNA and in mRNAs. Plays a regulatory role in the translation apparatus; inhibits cell-free translation of mRNAs. The chain is Large ribosomal subunit protein uL30 (Rpl7) from Rattus norvegicus (Rat).